We begin with the raw amino-acid sequence, 274 residues long: N-acetylmuramic acid 6-phosphate etherase (274 aa).

The SIS domain maps to 52 to 215 (IVPRMEQGGR…STSIMIRLGR (164 aa)). Glutamate 80 (proton donor) is an active-site residue. Glutamate 111 is a catalytic residue.

This sequence belongs to the GCKR-like family. MurNAc-6-P etherase subfamily. As to quaternary structure, homodimer.

It catalyses the reaction N-acetyl-D-muramate 6-phosphate + H2O = N-acetyl-D-glucosamine 6-phosphate + (R)-lactate. The protein operates within amino-sugar metabolism; N-acetylmuramate degradation. Its function is as follows. Specifically catalyzes the cleavage of the D-lactyl ether substituent of MurNAc 6-phosphate, producing GlcNAc 6-phosphate and D-lactate. This Porphyromonas gingivalis (strain ATCC 33277 / DSM 20709 / CIP 103683 / JCM 12257 / NCTC 11834 / 2561) protein is N-acetylmuramic acid 6-phosphate etherase.